The chain runs to 106 residues: Small ribosomal subunit protein uS10 (106 aa).

This sequence belongs to the universal ribosomal protein uS10 family. As to quaternary structure, part of the 30S ribosomal subunit.

Its function is as follows. Involved in the binding of tRNA to the ribosomes. This Synechococcus sp. (strain CC9311) protein is Small ribosomal subunit protein uS10.